The primary structure comprises 555 residues: Potassium-transporting ATPase potassium-binding subunit (555 aa).

10 helical membrane-spanning segments follow: residues 2 to 22 (IWVAVVITMLLFILVAKPTGI), 60 to 80 (QYALSLVLLNGFMIVVVYFIF), 130 to 150 (IGITFLMFAAPATTLALVMAF), 173 to 193 (VFLPIAFMAALVFVALGVPQT), 246 to 266 (MSNILQMMLMMLLPTALPFTY), 278 to 298 (ILFVSLFMVFLLGFITITTSE), 374 to 394 (AGFVNIIMYAIIAVFISGLMV), 412 to 432 (LIAVTILFHPLLILGFSALAL), 483 to 503 (LVMFLGRYFSLITMLAVAASL), and 525 to 545 (GIFIGTIVIVGALTFFPMLVL).

This sequence belongs to the KdpA family. In terms of assembly, the system is composed of three essential subunits: KdpA, KdpB and KdpC.

It localises to the cell membrane. Functionally, part of the high-affinity ATP-driven potassium transport (or Kdp) system, which catalyzes the hydrolysis of ATP coupled with the electrogenic transport of potassium into the cytoplasm. This subunit binds the extracellular potassium ions and delivers the ions to the membrane domain of KdpB through an intramembrane tunnel. This Bacillus thuringiensis (strain Al Hakam) protein is Potassium-transporting ATPase potassium-binding subunit.